Reading from the N-terminus, the 228-residue chain is UPF0173 metal-dependent hydrolase BLi03080/BL00413 (228 aa).

The protein belongs to the UPF0173 family.

The sequence is that of UPF0173 metal-dependent hydrolase BLi03080/BL00413 from Bacillus licheniformis (strain ATCC 14580 / DSM 13 / JCM 2505 / CCUG 7422 / NBRC 12200 / NCIMB 9375 / NCTC 10341 / NRRL NRS-1264 / Gibson 46).